A 193-amino-acid polypeptide reads, in one-letter code: dTTP/UTP pyrophosphatase (193 aa).

Aspartate 71 serves as the catalytic Proton acceptor.

It belongs to the Maf family. YhdE subfamily. Requires a divalent metal cation as cofactor.

The protein localises to the cytoplasm. It carries out the reaction dTTP + H2O = dTMP + diphosphate + H(+). The catalysed reaction is UTP + H2O = UMP + diphosphate + H(+). In terms of biological role, nucleoside triphosphate pyrophosphatase that hydrolyzes dTTP and UTP. May have a dual role in cell division arrest and in preventing the incorporation of modified nucleotides into cellular nucleic acids. The chain is dTTP/UTP pyrophosphatase from Dictyoglomus thermophilum (strain ATCC 35947 / DSM 3960 / H-6-12).